A 375-amino-acid polypeptide reads, in one-letter code: Ribosomal RNA large subunit methyltransferase G (375 aa).

This sequence belongs to the methyltransferase superfamily. RlmG family.

The protein resides in the cytoplasm. The catalysed reaction is guanosine(1835) in 23S rRNA + S-adenosyl-L-methionine = N(2)-methylguanosine(1835) in 23S rRNA + S-adenosyl-L-homocysteine + H(+). Specifically methylates the guanine in position 1835 (m2G1835) of 23S rRNA. This Erwinia tasmaniensis (strain DSM 17950 / CFBP 7177 / CIP 109463 / NCPPB 4357 / Et1/99) protein is Ribosomal RNA large subunit methyltransferase G.